Reading from the N-terminus, the 481-residue chain is Guanine nucleotide exchange factor C9orf72 (481 aa).

Residues 23–194 form the uDENN C9ORF72-type domain; that stretch reads SPLLAATFAY…ELLSSMKSHS (172 aa). A cDENN C9ORF72-type domain is found at 200 to 343; it reads DIADTVLNDD…SELTAFWRAT (144 aa). The dDENN C9ORF72-type domain occupies 370 to 464; the sequence is VLHRDTLVKA…IKPGLHSFIF (95 aa). Positions 461-481 are required for the homodimerization of the C9orf72-SMCR8 complex; sequence SFIFGRPFYTSVQERDVLMTF.

In terms of assembly, component of the C9orf72-SMCR8 complex, at least composed of C9orf72, SMCR8 and WDR41. The complex is formed of two protomers, each individually consisting of one molecule each of C9orf72, SMCR8 and WDR41. The protomers homodimerize via an interaction between C9orf72 (via C-terminus) and SMCR8 (via N-terminus). Within each protomer SMCR8 (via DENN domain) acts as a bridging protein between WDR41 (via C-terminus and N-terminus) and C9orf72 (via C-terminus). The C9orf72-SMCR8 complex associates with the ULK1/ATG1 kinase complex. Interacts with ULK1/ATG1 kinase complex members ULK1, ATG13 and RB1CC1. Interacts with SMCR8; the interaction is direct. Interacts with HNRNPA1, HNRNPA2B1 and UBQLN2. Interacts with small Rab GTPase RAB1A; the interaction mediates recruitment of RAB1A to the ULK1/ATG1 kinase complex. Also interacts with small Rab GTPase RAB7A. Interacts with cofilin. Interacts with GTP-binding proteins ARF1 and ARF6. Interacts with the DLG4/PSD-95. Interacts with CARM1 (via PH domain-like fold). Interacts with RAB39A and RAB39B (in GDP-bound forms); functions as GEF for RAB39A and RAB39B. As to expression, both isoforms are widely expressed, including kidney, lung, liver, heart, testis and several brain regions, such as cerebellum. Also expressed in the frontal cortex and in lymphoblasts (at protein level).

It localises to the cytoplasm. Its subcellular location is the nucleus. It is found in the P-body. The protein resides in the stress granule. The protein localises to the endosome. It localises to the lysosome. Its subcellular location is the cytoplasmic vesicle. It is found in the autophagosome. The protein resides in the autolysosome. The protein localises to the secreted. It localises to the cell projection. Its subcellular location is the axon. It is found in the growth cone. The protein resides in the perikaryon. The protein localises to the dendrite. It localises to the presynapse. Its subcellular location is the postsynapse. It is found in the nucleus membrane. Functionally, acts as a guanine-nucleotide releasing factor (GEF) for Rab GTPases by promoting the conversion of inactive RAB-GDP to the active form RAB-GTP. Acts as a GEF for RAB39A which enables HOPS-mediated autophagosome-lysosome membrane tethering and fusion in mammalian autophagy. Component of the C9orf72-SMCR8 complex where both subunits display GEF activity and that regulates autophagy. As part of the C9orf72-SMCR8-WDR41 (CSW) complex, functions as GEF for RAB8A and RAB39B, thereby promoting autophagosome maturation. As part of the C9orf72-SMCR8 complex, also functions as GTPase activating protein (GAP) for RAB8A and RAB11A in vitro. The C9orf72-SMCR8 complex also acts as a regulator of autophagy initiation by interacting with the ULK1/ATG1 kinase complex and modulating its protein kinase activity. Promotes initiation of autophagy by regulating the RAB1A-dependent trafficking of the ULK1/ATG1 kinase complex to the phagophore which leads to autophagosome formation. Acts as a regulator of mTORC1 signaling by promoting phosphorylation of mTORC1 substrates. Plays a role in endosomal trafficking. May be involved in regulating the maturation of phagosomes to lysosomes. Promotes the lysosomal localization and lysosome-mediated degradation of CARM1 which leads to inhibition of starvation-induced lipid metabolism. Regulates actin dynamics in motor neurons by inhibiting the GTP-binding activity of ARF6, leading to ARF6 inactivation. This reduces the activity of the LIMK1 and LIMK2 kinases which are responsible for phosphorylation and inactivation of cofilin, leading to CFL1/cofilin activation. Positively regulates axon extension and axon growth cone size in spinal motor neurons. Required for SMCR8 protein expression and localization at pre- and post-synaptic compartments in the forebrain, also regulates protein abundance of RAB3A and GRIA1/GLUR1 in post-synaptic compartments in the forebrain and hippocampus. Plays a role within the hematopoietic system in restricting inflammation and the development of autoimmunity. Regulates stress granule assembly in response to cellular stress. Its function is as follows. Does not play a role in regulation of stress granule assembly in response to cellular stress. In Homo sapiens (Human), this protein is Guanine nucleotide exchange factor C9orf72.